Here is an 819-residue protein sequence, read N- to C-terminus: Nonribosomal peptide synthetase 9 (819 aa).

The segment at 202–591 (LQAPTQHAVR…GRKDTQAKIR (390 aa)) is adenylation (A) domain. In terms of domain architecture, Carrier spans 722–798 (QPRNERERLI…SLAEFLSSSS (77 aa)). Ser759 is modified (O-(pantetheine 4'-phosphoryl)serine).

It belongs to the NRP synthetase family.

The protein operates within secondary metabolite biosynthesis. Nonribosomal peptide synthetase; part of the Fg3_54/C64 gene cluster that mediates the biosynthesis of the octapeptide fusaoctaxin A, a virulence factor that is required for cell-to-cell invasiveness of plant host. The 2 nonribosomal peptide synthetases NRPS9 and NRPS5 form an assembly line which likely utilizes GABA as a starter unit (loaded on the unique module M1 of NRPS9) and sequentially incorporates seven extender units composed of the residues L-Ala, L-allo-Ile, L-Ser, L-Val, L-Ser, L-Leu and L-Leu, respectively. During the process, each of the residues that are tethered on modules M3-M7 of NRPS5 containing an E domain can undergo an epimerization reaction to produce a D-configuration before the transpeptidation reaction occurs. The elongation of the peptidyl chain might be terminated by module M8-mediated L-Leu incorporation, followed by R domain-catalyzed 4 electron reduction to release the resulting octapeptide from the assembly line as an alcohol. Fusaoctaxin A is cleaved by the cluster specific ABC transporter FGM5 to the pentapeptide fusapentaxin A and the tripeptide fusatrixin A. The other enzymes from the cluster, FGM1, FGM2, FGM3 and FGM9 seem not to be involved in the biosynthesis of fusaoctaxin A and their functions have still to be determined. This Gibberella zeae (strain ATCC MYA-4620 / CBS 123657 / FGSC 9075 / NRRL 31084 / PH-1) (Wheat head blight fungus) protein is Nonribosomal peptide synthetase 9.